We begin with the raw amino-acid sequence, 308 residues long: Ribosomal RNA small subunit methyltransferase H (308 aa).

S-adenosyl-L-methionine-binding positions include 31–33 (GGH), Asp51, Phe75, Asp97, and Gln104.

This sequence belongs to the methyltransferase superfamily. RsmH family.

The protein localises to the cytoplasm. The enzyme catalyses cytidine(1402) in 16S rRNA + S-adenosyl-L-methionine = N(4)-methylcytidine(1402) in 16S rRNA + S-adenosyl-L-homocysteine + H(+). Specifically methylates the N4 position of cytidine in position 1402 (C1402) of 16S rRNA. This Tolumonas auensis (strain DSM 9187 / NBRC 110442 / TA 4) protein is Ribosomal RNA small subunit methyltransferase H.